The sequence spans 201 residues: Small ribosomal subunit protein uS4c (201 aa).

Residues 19–38 form a disordered region; the sequence is PGLTSKSPKAGSDLRNQLRS. One can recognise an S4 RNA-binding domain in the interval 89–149; it reads MRLDNILFRL…DEQKSRALIQ (61 aa).

Belongs to the universal ribosomal protein uS4 family. As to quaternary structure, part of the 30S ribosomal subunit. Contacts protein S5. The interaction surface between S4 and S5 is involved in control of translational fidelity.

The protein resides in the plastid. It localises to the chloroplast. Its function is as follows. One of the primary rRNA binding proteins, it binds directly to 16S rRNA where it nucleates assembly of the body of the 30S subunit. With S5 and S12 plays an important role in translational accuracy. The protein is Small ribosomal subunit protein uS4c (rps4) of Platanus occidentalis (Sycamore).